We begin with the raw amino-acid sequence, 237 residues long: Necrosis-inducing protein NPP1 (237 aa).

Residues 1 to 19 (MNVLTFLIAAAVSLAVVQA) form the signal peptide. Asn67 carries N-linked (GlcNAc...) asparagine glycosylation. Residues 103–113 (AIMYSWYFPKD) carry the Conserved undecapeptide motif motif. Residues 120–126 (GHRHDWE) carry the Conserved heptapetpide motif motif.

This sequence belongs to the Necrosis inducing protein (NPP1) family.

The protein localises to the secreted. Functionally, secreted effector that acts as a pathogen-associated molecular pattern (PAMP) recognized by the plant immune system. Induces necrotic cell death and ethylene biosynthesis in parsley. Stimulates early induced host cellular responses implicated in elicitor signal transmission such as increased levels of cytoplasmic calcium, production of reactive oxygen species (ROS), and MAP kinase activation. Infiltration of NPP1 into leaves of Arabidopsis thaliana results in transcript accumulation of pathogenesis-related (PR) genes, production of ROS and ethylene, callose apposition, and hypersensitive response (HR)-like cell death. NPP1-mediated induction of the PR1 gene is salicylic acid-dependent, and requires both functional NDR1 and PAD4. This is Necrosis-inducing protein NPP1 from Phytophthora nicotianae (Potato buckeye rot agent).